The primary structure comprises 360 residues: Peptide chain release factor 1 (360 aa).

At Gln-237 the chain carries N5-methylglutamine.

The protein belongs to the prokaryotic/mitochondrial release factor family. Post-translationally, methylated by PrmC. Methylation increases the termination efficiency of RF1.

The protein localises to the cytoplasm. Its function is as follows. Peptide chain release factor 1 directs the termination of translation in response to the peptide chain termination codons UAG and UAA. The protein is Peptide chain release factor 1 of Nitrosococcus oceani (strain ATCC 19707 / BCRC 17464 / JCM 30415 / NCIMB 11848 / C-107).